A 169-amino-acid polypeptide reads, in one-letter code: Flagellar biosynthetic protein FliU (169 aa).

This sequence belongs to the FliB family.

Its function is as follows. Required for the secretion of flagellin and expression of motility. The sequence is that of Flagellar biosynthetic protein FliU (fliU) from Salmonella muenchen.